The primary structure comprises 273 residues: Putative pyruvate, phosphate dikinase regulatory protein (273 aa).

Residue 153–160 (GISRTSKT) coordinates ADP.

It belongs to the pyruvate, phosphate/water dikinase regulatory protein family. PDRP subfamily.

The enzyme catalyses N(tele)-phospho-L-histidyl/L-threonyl-[pyruvate, phosphate dikinase] + ADP = N(tele)-phospho-L-histidyl/O-phospho-L-threonyl-[pyruvate, phosphate dikinase] + AMP + H(+). It carries out the reaction N(tele)-phospho-L-histidyl/O-phospho-L-threonyl-[pyruvate, phosphate dikinase] + phosphate + H(+) = N(tele)-phospho-L-histidyl/L-threonyl-[pyruvate, phosphate dikinase] + diphosphate. In terms of biological role, bifunctional serine/threonine kinase and phosphorylase involved in the regulation of the pyruvate, phosphate dikinase (PPDK) by catalyzing its phosphorylation/dephosphorylation. This is Putative pyruvate, phosphate dikinase regulatory protein from Rhizobium leguminosarum bv. trifolii (strain WSM2304).